Consider the following 350-residue polypeptide: S-adenosylmethionine:tRNA ribosyltransferase-isomerase (350 aa).

The protein belongs to the QueA family. Monomer.

It localises to the cytoplasm. The enzyme catalyses 7-aminomethyl-7-carbaguanosine(34) in tRNA + S-adenosyl-L-methionine = epoxyqueuosine(34) in tRNA + adenine + L-methionine + 2 H(+). Its pathway is tRNA modification; tRNA-queuosine biosynthesis. Functionally, transfers and isomerizes the ribose moiety from AdoMet to the 7-aminomethyl group of 7-deazaguanine (preQ1-tRNA) to give epoxyqueuosine (oQ-tRNA). In Bacillus cereus (strain 03BB102), this protein is S-adenosylmethionine:tRNA ribosyltransferase-isomerase.